A 386-amino-acid chain; its full sequence is NADH-ubiquinone oxidoreductase chain 4 (386 aa).

The next 11 membrane-spanning stretches (helical) occupy residues 8–28, 37–57, 61–81, 91–111, 133–153, 167–187, 189–209, 219–239, 247–267, 283–303, and 315–335; these read SEFH…YFLF, WPLS…LTFT, FILF…LILG, ASYY…FIII, IFLL…AHIW, MVLA…VQVL, IYSE…SCLI, LIAY…LMSC, ILMM…SYLF, ISLF…NMGL, and FFIG…ILCF.

Belongs to the complex I subunit 4 family.

The protein localises to the mitochondrion membrane. It catalyses the reaction a ubiquinone + NADH + 5 H(+)(in) = a ubiquinol + NAD(+) + 4 H(+)(out). Functionally, core subunit of the mitochondrial membrane respiratory chain NADH dehydrogenase (Complex I) that is believed to belong to the minimal assembly required for catalysis. Complex I functions in the transfer of electrons from NADH to the respiratory chain. The immediate electron acceptor for the enzyme is believed to be ubiquinone. The polypeptide is NADH-ubiquinone oxidoreductase chain 4 (ND4) (Artemia franciscana (Brine shrimp)).